We begin with the raw amino-acid sequence, 336 residues long: Potassium channel subfamily K member 1 (336 aa).

The Cytoplasmic segment spans residues 1–20; sequence MLQSLAGSSCVRLVERHRSA. The helical transmembrane segment at 21–41 threads the bilayer; it reads WCFGFLVLGYLLYLVFGAVVF. Residues 42-103 lie on the Extracellular side of the membrane; it reads SSVELPYEDL…SNASGNWNWD (62 aa). Asparagine 95 is a glycosylation site (N-linked (GlcNAc...) asparagine). The helical intramembrane region spans 104–116; it reads FASALFFASTVLS. An intramembrane segment occupies 117–122; that stretch reads TTGYGH. Residues 117 to 122 form a selectivity filter 1 region; that stretch reads TTGYGH. The Extracellular segment spans residues 123–132; it reads TVPLSDGGKA. Residues 133-156 form a helical membrane-spanning segment; the sequence is FCIIYSVIGIPFTLLFLTAVVQRV. Residues 157 to 181 are Cytoplasmic-facing; the sequence is TVHVTRRPVLYFHVRWGFSKQVVAI. A helical membrane pass occupies residues 182–202; sequence VHAVLLGLITVSCFFFIPAAV. At 203-211 the chain is on the extracellular side; the sequence is FSVLEDDWN. Positions 212-224 form an intramembrane region, helical; that stretch reads FLESFYFCFISLS. A selectivity filter 2 region spans residues 225-230; it reads TIGLGD. Residues 225–231 lie within the membrane without spanning it; the sequence is TIGLGDY. At 232-243 the chain is on the extracellular side; sequence VPGEGYNQKFRE. A helical transmembrane segment spans residues 244–267; the sequence is LYKIGITCYLLLGLIAMLVVLETF. The Cytoplasmic segment spans residues 268 to 336; that stretch reads CELHELKKFR…SACADGPANH (69 aa). Lysine 274 is covalently cross-linked (Glycyl lysine isopeptide (Lys-Gly) (interchain with G-Cter in SUMO)). The important for intracellular retention in recycling endosomes stretch occupies residues 293-299; the sequence is IIEHDQL. The tract at residues 315–336 is disordered; the sequence is QKQNEPFVATPSSACADGPANH. Residue serine 326 is modified to Phosphoserine.

This sequence belongs to the two pore domain potassium channel (TC 1.A.1.8) family. Homodimer; disulfide-linked. Heterodimer with KCNK2; disulfide-linked. In astrocytes, forms mostly heterodimeric potassium channels with KCNK2, with only a minor proportion of functional channels containing homodimeric KCNK1. Interacts with KCNK3 and KCNK9, forming functional heterodimeric channels. Interacts with GNG4. Identified in a complex with PSD and ARF6; interacts only with PSD that is bound to ARF6. Interacts with UBE2I. In terms of processing, sumoylation is controversial. Sumoylated by UBE2I. Not sumoylated when expressed in xenopus oocytes or mammalian cells. Sumoylation inactivates the channel, but does not interfere with expression at the cell membrane. Sumoylation of a single subunit is sufficient to silence the dimeric channel. Sumoylation of KCNK1 is sufficient to silence heterodimeric channels formed by KCNK1 and KCNK3 or KCNK9. Desumoylated by SENP1; this activates the channel. Desumoylated by SENP1; this strongly increases halothane-mediated activation of heterodimeric channels formed with KCNK9. SENP1 treatment has no effect. Expressed in renal distal tubules, especially in cortical collecting duct and cortical thick ascending limb, with lower levels in the connecting tubule.

The protein localises to the cell membrane. The protein resides in the recycling endosome. Its subcellular location is the synaptic cell membrane. It localises to the cytoplasmic vesicle. It is found in the perikaryon. The protein localises to the cell projection. The protein resides in the dendrite. Its subcellular location is the apical cell membrane. It catalyses the reaction K(+)(in) = K(+)(out). It carries out the reaction NH4(+)(in) = NH4(+)(out). The catalysed reaction is Na(+)(in) = Na(+)(out). The enzyme catalyses Rb(+)(in) = Rb(+)(out). It catalyses the reaction Cs(+)(in) = Cs(+)(out). It carries out the reaction Li(+)(in) = Li(+)(out). The catalysed reaction is L-glutamate(out) = L-glutamate(in). The enzyme catalyses chloride(in) = chloride(out). In terms of biological role, ion channel that contributes to passive transmembrane potassium transport and to the regulation of the resting membrane potential in brain astrocytes, but also in kidney and in other tissues. Forms dimeric channels through which potassium ions pass in accordance with their electrochemical gradient. The channel is selective for K(+) ions at physiological potassium concentrations and at neutral pH, but becomes permeable to Na(+) at subphysiological K(+) levels and upon acidification of the extracellular medium. The homodimer has very low potassium channel activity, when expressed in heterologous systems, and can function as weakly inward rectifying potassium channel. Channel activity is modulated by activation of serotonin receptors. Heterodimeric channels containing KCNK1 and KCNK2 have much higher activity, and may represent the predominant form in astrocytes. Heterodimeric channels containing KCNK1 and KCNK3 or KCNK9 have much higher activity. Heterodimeric channels formed by KCNK1 and KCNK9 may contribute to halothane-sensitive currents. Mediates outward rectifying potassium currents in dentate gyrus granule cells and contributes to the regulation of their resting membrane potential. Contributes to the regulation of action potential firing in dentate gyrus granule cells and down-regulates their intrinsic excitability. In astrocytes, the heterodimer formed by KCNK1 and KCNK2 is required for rapid glutamate release in response to activation of G-protein coupled receptors, such as F2R and CNR1. Required for normal ion and water transport in the kidney. Contributes to the regulation of the resting membrane potential of pancreatic beta cells. The low channel activity of homodimeric KCNK1 may be due to sumoylation. The low channel activity may be due to rapid internalization from the cell membrane and retention in recycling endosomes. Permeable to monovalent cations with ion selectivity for K(+) &gt; Rb(+) &gt;&gt; NH4(+) &gt;&gt; Cs(+) = Na(+) = Li(+). The polypeptide is Potassium channel subfamily K member 1 (Oryctolagus cuniculus (Rabbit)).